Here is a 320-residue protein sequence, read N- to C-terminus: Olfactory receptor 13C8 (320 aa).

The Extracellular segment spans residues 1-25 (MERTNDSTSTEFFLVGLSAHPKLQT). N-linked (GlcNAc...) asparagine glycosylation is present at Asn-5. A helical transmembrane segment spans residues 26 to 46 (VFFVLILWMYLMILLGNGVLI). Topologically, residues 47–54 (SVIIFDSH) are cytoplasmic. The helical transmembrane segment at 55 to 75 (LHTPMYFFLCNLSFLDVCYTS) threads the bilayer. Residues 76 to 99 (SSVPLILASFLAVKKKVSFSGCMV) are Extracellular-facing. Cysteines 97 and 189 form a disulfide. A helical membrane pass occupies residues 100-120 (QMFISFAMGATECMILGTMAL). The Cytoplasmic portion of the chain corresponds to 121-139 (DRYVAICYPLRYPVIMSKG). A helical transmembrane segment spans residues 140–160 (AYVAMAAGSWVTGLVDSVVQT). Over 161–197 (AFAMQLPFCANNVIKHFVCEILAILKLACADISINVI) the chain is Extracellular. Residues 198–217 (SMTGSNLIVLVIPLLVISIS) form a helical membrane-spanning segment. Topologically, residues 218–237 (YIFIVATILRIPSTEGKHKA) are cytoplasmic. A helical transmembrane segment spans residues 238–258 (FSTCSAHLTVVIIFYGTIFFM). At 259 to 277 (YAKPESKASVDSGNEDIIE) the chain is on the extracellular side. Residues 278–298 (ALISLFYGVMTPMLNPLIYSL) form a helical membrane-spanning segment. Topologically, residues 299–320 (RNKDVKAAVKNILCRKNFSDGK) are cytoplasmic.

Belongs to the G-protein coupled receptor 1 family.

The protein resides in the cell membrane. Functionally, odorant receptor. The protein is Olfactory receptor 13C8 (OR13C8) of Homo sapiens (Human).